Consider the following 279-residue polypeptide: MKLEKDRDVLSLKGVSVRYVDSTVALHPTSLDVKQGEFLVLLGASGAGKSTLLRSINGLVLPTKGEVSIPGLAGGVVNAKTLREHRKRCGMVFQQHHLIGRQSVLRNVLMGKLGDRGAFASLWPWSKKDKLEALTVIERVGLLEKALSRADALSGGQQQRVGIARALIQKPRILLADEPVASLDPATAHSVLTLLHEICKKDHLTAIVSLHQVELARSFADRIIGLRQGAVVFEGRAEQLSPDVARNLYAKQSNASNTSASTDSPRTLQSSQTKELLPC.

An ABC transporter domain is found at 10-253; it reads LSLKGVSVRY…VARNLYAKQS (244 aa). Position 43 to 50 (43 to 50) interacts with ATP; it reads GASGAGKS. The segment covering 253–262 has biased composition (low complexity); it reads SNASNTSAST. The interval 253 to 279 is disordered; it reads SNASNTSASTDSPRTLQSSQTKELLPC. Residues 263 to 279 are compositionally biased toward polar residues; sequence DSPRTLQSSQTKELLPC.

This sequence belongs to the ABC transporter superfamily. Phosphonates importer (TC 3.A.1.9.1) family. As to quaternary structure, the complex is composed of two ATP-binding proteins (PhnC), two transmembrane proteins (PhnE) and a solute-binding protein (PhnD).

The protein localises to the cell inner membrane. The enzyme catalyses phosphonate(out) + ATP + H2O = phosphonate(in) + ADP + phosphate + H(+). Its function is as follows. Part of the ABC transporter complex PhnCDE involved in phosphonates import. Responsible for energy coupling to the transport system. This chain is Phosphonates import ATP-binding protein PhnC 2, found in Cupriavidus metallidurans (strain ATCC 43123 / DSM 2839 / NBRC 102507 / CH34) (Ralstonia metallidurans).